The following is a 163-amino-acid chain: Lysosomal enzyme trafficking factor (163 aa).

A run of 2 helical transmembrane segments spans residues 40–60 (MGWI…YYVF) and 98–118 (LPFW…FLFL).

This sequence belongs to the LYSET family. As to quaternary structure, interacts with GNPTAB; this interaction is important for proper localization of GNPTAB in Golgi stacks. Interacts with MBTPS1.

It is found in the golgi apparatus membrane. Required for mannose-6-phosphate-dependent trafficking of lysosomal enzymes. LYSET bridges GlcNAc-1-phosphate transferase (GNPTAB), to the membrane-bound transcription factor site-1 protease (MBTPS1), thus allowing proteolytic activation of the GNPTAB. GNPTAB is involved in the regulation of M6P-dependent Golgi-to-lysosome trafficking of lysosomal enzymes. LYSET is thus an essential factor for maturation and delivery of lysosomal hydrolases. This is Lysosomal enzyme trafficking factor (LYSET) from Bos taurus (Bovine).